A 301-amino-acid chain; its full sequence is 4-hydroxybenzoate octaprenyltransferase (301 aa).

A run of 7 helical transmembrane segments spans residues 34–54 (IGSL…AGGL), 57–77 (LWTL…GCVI), 108–128 (LWVF…LNWL), 163–183 (WGIP…AWLL), 222–242 (DLIA…LVGL), 248–268 (IAYW…FHIA), and 280–300 (FLHN…SLAL).

It belongs to the UbiA prenyltransferase family. It depends on Mg(2+) as a cofactor.

It localises to the cell inner membrane. The enzyme catalyses all-trans-octaprenyl diphosphate + 4-hydroxybenzoate = 4-hydroxy-3-(all-trans-octaprenyl)benzoate + diphosphate. The protein operates within cofactor biosynthesis; ubiquinone biosynthesis. In terms of biological role, catalyzes the prenylation of para-hydroxybenzoate (PHB) with an all-trans polyprenyl group. Mediates the second step in the final reaction sequence of ubiquinone-8 (UQ-8) biosynthesis, which is the condensation of the polyisoprenoid side chain with PHB, generating the first membrane-bound Q intermediate 3-octaprenyl-4-hydroxybenzoate. This is 4-hydroxybenzoate octaprenyltransferase from Xanthomonas campestris pv. campestris (strain 8004).